Reading from the N-terminus, the 246-residue chain is Homeobox protein SIX6 (246 aa).

Positions 126 to 186 (WDGEQKTHCF…KNRRQRDRAA (61 aa)) form a DNA-binding region, homeobox. Residues 190-246 (NRLQQQVLSQGPGRVLRSEGEGTPEVLGVASSPAASLSSKAATSAISITSSDSECDI) are disordered. Residue T212 is modified to Phosphothreonine. Positions 219–246 (ASSPAASLSSKAATSAISITSSDSECDI) are enriched in low complexity. Residues S221, S225, S227, and S228 each carry the phosphoserine modification.

Belongs to the SIX/Sine oculis homeobox family. As to quaternary structure, interacts with TLE4 and TLE5. In terms of tissue distribution, in the developing embryo, expressed mainly in the ventral optic stalk, optic chiasma, the neural retina and the primordial tissues that give rise to the pituitary/hypothalamus axis. Not expressed in the lens placode.

The protein localises to the nucleus. May be involved in eye development. The polypeptide is Homeobox protein SIX6 (Six6) (Mus musculus (Mouse)).